Here is a 325-residue protein sequence, read N- to C-terminus: MKRTDSTAKATAPNPPLAPLLVILGNTGSGKSALALKLAREIPAGIVNADSRQIYSQMDIATAKPTPAEMSEIPHYLYSFIQPDQPFSLAEYQSLAYQAINKLHTQNRLPILVGGSGQYLKAVLEGWSIPQIAPDETFRAAMFEKAEKEGGASIFAELVKQDPQAAAKIDPRNIRRVVRALEVINKTGAEFSKLQTKNPPPYRVLKIGIHLAREELYRTVDLRVGKMLEQGLEAEVRHLLEQGYAATLPSMSGIGYRQIAKYIGGEISLSEAIEQMQFETHRLIRQQNTYFRLADPDIHWITLEESMDSGIINLVRNFLADGGKE.

25-32 contacts ATP; the sequence is GNTGSGKS. 27-32 contacts substrate; sequence TGSGKS. Positions 50-53 are interaction with substrate tRNA; it reads DSRQ.

This sequence belongs to the IPP transferase family. In terms of assembly, monomer. Mg(2+) is required as a cofactor.

The catalysed reaction is adenosine(37) in tRNA + dimethylallyl diphosphate = N(6)-dimethylallyladenosine(37) in tRNA + diphosphate. Functionally, catalyzes the transfer of a dimethylallyl group onto the adenine at position 37 in tRNAs that read codons beginning with uridine, leading to the formation of N6-(dimethylallyl)adenosine (i(6)A). This Dehalococcoides mccartyi (strain ATCC BAA-2266 / KCTC 15142 / 195) (Dehalococcoides ethenogenes (strain 195)) protein is tRNA dimethylallyltransferase.